A 184-amino-acid chain; its full sequence is Ribosome-recycling factor (184 aa).

Residues 141–164 (DEKNGDITEDDLRSQTEDVQKATD) are disordered.

It belongs to the RRF family.

The protein localises to the cytoplasm. Responsible for the release of ribosomes from messenger RNA at the termination of protein biosynthesis. May increase the efficiency of translation by recycling ribosomes from one round of translation to another. In Staphylococcus haemolyticus (strain JCSC1435), this protein is Ribosome-recycling factor.